The chain runs to 130 residues: Small ribosomal subunit protein uS11 (130 aa).

The protein belongs to the universal ribosomal protein uS11 family. Part of the 30S ribosomal subunit. Interacts with proteins S7 and S18. Binds to IF-3.

Located on the platform of the 30S subunit, it bridges several disparate RNA helices of the 16S rRNA. Forms part of the Shine-Dalgarno cleft in the 70S ribosome. This chain is Small ribosomal subunit protein uS11, found in Synechococcus sp. (strain CC9605).